Reading from the N-terminus, the 414-residue chain is Serine/arginine (SR)-type shuttling mRNA binding protein NPL3 (414 aa).

The segment covering 1-11 has biased composition (basic and acidic residues); sequence MSEAQETHVEQ. Residues 1–119 are disordered; sequence MSEAQETHVE…GRPPMHHRQE (119 aa). The residue at position 15 (Ser-15) is a Phosphoserine. The segment covering 33–51 has biased composition (low complexity); the sequence is DAPQEPQVPQESAPQESAP. Positions 52–68 are enriched in pro residues; it reads QEPPAPQEQNDVPPPSN. A compositionally biased stretch (basic and acidic residues) spans 75-92; that stretch reads EESHSVQDYQEAHQHHQP. Residue Ser-79 is modified to Phosphoserine. Residues 93–105 are compositionally biased toward pro residues; that stretch reads PEPQPYYPPPPPG. 2 RRM domains span residues 125-195 and 200-275; these read TRLF…YSKL and YRIT…RDDN. Residues Ser-182, Ser-212, and Ser-224 each carry the phosphoserine modification. The tract at residues 269 to 299 is disordered; the sequence is TVERDDNPPPIRRSNRGGFRGRGGFRGGFRG. The segment covering 286–299 has biased composition (gly residues); it reads GFRGRGGFRGGFRG. Dimethylated arginine is present on residues Arg-288, Arg-290, Arg-294, and Arg-298. An Omega-N-methylarginine modification is found at Arg-302. Arg-307 and Arg-314 each carry dimethylated arginine; alternate. Omega-N-methylarginine; alternate is present on residues Arg-307 and Arg-314. Omega-N-methylarginine occurs at positions 321, 329, 337, and 344. A disordered region spans residues 343–414; the sequence is SRGGYDSPRG…DAPRERSPTR (72 aa). Over residues 346-360 the composition is skewed to low complexity; that stretch reads GYDSPRGGYDSPRGG. Position 351 is a dimethylated arginine; alternate (Arg-351). The residue at position 351 (Arg-351) is an Omega-N-methylarginine; alternate. Ser-356 carries the post-translational modification Phosphoserine. Arg-358, Arg-363, Arg-377, and Arg-384 each carry dimethylated arginine; alternate. An omega-N-methylarginine; alternate mark is found at Arg-358, Arg-363, Arg-377, and Arg-384. Gly residues predominate over residues 379–389; the sequence is SYGGSRGGYDG. Arg-391 carries the omega-N-methylarginine modification. Basic and acidic residues predominate over residues 399-414; it reads DAYRTRDAPRERSPTR.

It belongs to the RRM GAR family. In terms of assembly, interacts with RRP6. In terms of processing, methylated by HMT1. The methylation is required for nuclear export.

It localises to the cytoplasm. It is found in the nucleus. The protein localises to the stress granule. In terms of biological role, involved in mRNA processing and export. Required for efficient splicing of a large set of pre-mRNAs by efficient co-transcriptional recruitment of the splicing machinery. Remains associated with the mRNP during early steps of translation elongation. The polypeptide is Serine/arginine (SR)-type shuttling mRNA binding protein NPL3 (Saccharomyces cerevisiae (strain ATCC 204508 / S288c) (Baker's yeast)).